The chain runs to 248 residues: Phosphatidylserine decarboxylase proenzyme (248 aa).

Serine 206 (schiff-base intermediate with substrate; via pyruvic acid) is an active-site residue. Pyruvic acid (Ser); by autocatalysis is present on serine 206.

It belongs to the phosphatidylserine decarboxylase family. PSD-A subfamily. As to quaternary structure, heterodimer of a large membrane-associated beta subunit and a small pyruvoyl-containing alpha subunit. Pyruvate serves as cofactor. Post-translationally, is synthesized initially as an inactive proenzyme. Formation of the active enzyme involves a self-maturation process in which the active site pyruvoyl group is generated from an internal serine residue via an autocatalytic post-translational modification. Two non-identical subunits are generated from the proenzyme in this reaction, and the pyruvate is formed at the N-terminus of the alpha chain, which is derived from the carboxyl end of the proenzyme. The post-translation cleavage follows an unusual pathway, termed non-hydrolytic serinolysis, in which the side chain hydroxyl group of the serine supplies its oxygen atom to form the C-terminus of the beta chain, while the remainder of the serine residue undergoes an oxidative deamination to produce ammonia and the pyruvoyl prosthetic group on the alpha chain.

The protein localises to the cell membrane. The catalysed reaction is a 1,2-diacyl-sn-glycero-3-phospho-L-serine + H(+) = a 1,2-diacyl-sn-glycero-3-phosphoethanolamine + CO2. The protein operates within phospholipid metabolism; phosphatidylethanolamine biosynthesis; phosphatidylethanolamine from CDP-diacylglycerol: step 2/2. In terms of biological role, catalyzes the formation of phosphatidylethanolamine (PtdEtn) from phosphatidylserine (PtdSer). This chain is Phosphatidylserine decarboxylase proenzyme, found in Nitrobacter hamburgensis (strain DSM 10229 / NCIMB 13809 / X14).